Here is a 736-residue protein sequence, read N- to C-terminus: Microtubule-associated protein mu-2 (736 aa).

Belongs to the orthoreovirus mu-2 protein family. In terms of assembly, interacts with protein mu-NS; in viral inclusions. Interacts with polymerase lambda-3; this interaction stimulates the ATPase activity of mu-2. The cofactor is a divalent metal cation.

Its subcellular location is the virion. The protein resides in the host cytoplasm. It is found in the host cytoskeleton. Its function is as follows. Minor inner capsid (core) component. Displays NTPase and RNA 5'-triphosphatase (RTPase) activities. ATP is the preferred substrate for hydrolysis. May function as a cofactor of polymerase lambda-3. Associates with microtubules and plays a role in the formation, structural organization and morphology of viral inclusions, where the assembly of cores and the replication of viral RNA occur. Together with mu-NS, recruits the other core proteins to these inclusions. The protein is Microtubule-associated protein mu-2 (M1) of Mammalia (T2J).